A 207-amino-acid chain; its full sequence is Histidine biosynthesis bifunctional protein HisIE (207 aa).

The tract at residues 1–117 (MSLVTTINWE…GKQEQPALVF (117 aa)) is phosphoribosyl-AMP cyclohydrolase. The segment at 118–207 (LHQLEQVLAN…TEKLQERHNK (90 aa)) is phosphoribosyl-ATP pyrophosphohydrolase.

The protein in the N-terminal section; belongs to the PRA-CH family. This sequence in the C-terminal section; belongs to the PRA-PH family.

The protein localises to the cytoplasm. The catalysed reaction is 1-(5-phospho-beta-D-ribosyl)-ATP + H2O = 1-(5-phospho-beta-D-ribosyl)-5'-AMP + diphosphate + H(+). The enzyme catalyses 1-(5-phospho-beta-D-ribosyl)-5'-AMP + H2O = 1-(5-phospho-beta-D-ribosyl)-5-[(5-phospho-beta-D-ribosylamino)methylideneamino]imidazole-4-carboxamide. It participates in amino-acid biosynthesis; L-histidine biosynthesis; L-histidine from 5-phospho-alpha-D-ribose 1-diphosphate: step 2/9. Its pathway is amino-acid biosynthesis; L-histidine biosynthesis; L-histidine from 5-phospho-alpha-D-ribose 1-diphosphate: step 3/9. In Photobacterium profundum (strain SS9), this protein is Histidine biosynthesis bifunctional protein HisIE.